We begin with the raw amino-acid sequence, 430 residues long: Bifunctional protein GlmU (430 aa).

The interval 1-223 (MSFSVVILAA…KNEFQGVNSK (223 aa)) is pyrophosphorylase. UDP-N-acetyl-alpha-D-glucosamine-binding positions include 8–11 (LAAG), K22, and 81–82 (GT). D102 serves as a coordination point for Mg(2+). UDP-N-acetyl-alpha-D-glucosamine-binding residues include G135, E149, N164, and N221. N221 lines the Mg(2+) pocket. A linker region spans residues 224–244 (YDLANAEIVMQDRIKRHWMQQ). The tract at residues 245–430 (GVIMRLPQTI…DFYYKFFGKN (186 aa)) is N-acetyltransferase. UDP-N-acetyl-alpha-D-glucosamine is bound by residues R308 and K325. H336 functions as the Proton acceptor in the catalytic mechanism. UDP-N-acetyl-alpha-D-glucosamine is bound by residues Y339 and N350. Acetyl-CoA contacts are provided by residues A353, 359 to 360 (NY), S378, A396, and R413.

The protein in the N-terminal section; belongs to the N-acetylglucosamine-1-phosphate uridyltransferase family. In the C-terminal section; belongs to the transferase hexapeptide repeat family. Homotrimer. Mg(2+) serves as cofactor.

Its subcellular location is the cytoplasm. The catalysed reaction is alpha-D-glucosamine 1-phosphate + acetyl-CoA = N-acetyl-alpha-D-glucosamine 1-phosphate + CoA + H(+). It catalyses the reaction N-acetyl-alpha-D-glucosamine 1-phosphate + UTP + H(+) = UDP-N-acetyl-alpha-D-glucosamine + diphosphate. It participates in nucleotide-sugar biosynthesis; UDP-N-acetyl-alpha-D-glucosamine biosynthesis; N-acetyl-alpha-D-glucosamine 1-phosphate from alpha-D-glucosamine 6-phosphate (route II): step 2/2. Its pathway is nucleotide-sugar biosynthesis; UDP-N-acetyl-alpha-D-glucosamine biosynthesis; UDP-N-acetyl-alpha-D-glucosamine from N-acetyl-alpha-D-glucosamine 1-phosphate: step 1/1. The protein operates within bacterial outer membrane biogenesis; LPS lipid A biosynthesis. Functionally, catalyzes the last two sequential reactions in the de novo biosynthetic pathway for UDP-N-acetylglucosamine (UDP-GlcNAc). The C-terminal domain catalyzes the transfer of acetyl group from acetyl coenzyme A to glucosamine-1-phosphate (GlcN-1-P) to produce N-acetylglucosamine-1-phosphate (GlcNAc-1-P), which is converted into UDP-GlcNAc by the transfer of uridine 5-monophosphate (from uridine 5-triphosphate), a reaction catalyzed by the N-terminal domain. The chain is Bifunctional protein GlmU from Nitratiruptor sp. (strain SB155-2).